The following is an 839-amino-acid chain: Autophagy-related protein 9A (839 aa).

The disordered stretch occupies residues 1-21 (MAQFDTEYQRLEASYSDSPPG). Alanine 2 is subject to N-acetylalanine. Topologically, residues 2 to 61 (AQFDTEYQRLEASYSDSPPGEEDLLVHVPEGSKSPWHHIENLDLFFSRVYNLHQKNGFTC) are cytoplasmic. Positions 8 to 11 (YQRL) match the Tyrosine-based sorting signal motif. A phosphoserine mark is found at serine 14, serine 16, and serine 18. A helical membrane pass occupies residues 62 to 84 (MLIGEIFELMQFLFVVAFTTFLV). Topologically, residues 85 to 128 (SCVDYDILFANKMVNHSLHPTEPVKVTLPDAFLPAQVCSARIQE) are lumenal. A glycan (N-linked (GlcNAc...) asparagine) is linked at asparagine 99. Residues 129 to 154 (NGSLITILVIAGVFWVHRLIKFIYNI) form a helical membrane-spanning segment. Residues 155 to 290 (CCYWEIHSFY…ELAQRLSNRI (136 aa)) are Cytoplasmic-facing. The stretch at 291–301 (LWIGIANFLLC) is an intramembrane region. At 302–319 (PLILIWQILYAFFSYAEV) the chain is on the cytoplasmic side. The stretch at 320–328 (LKREPGALG) is an intramembrane region. The Cytoplasmic segment spans residues 329 to 371 (ARCWSLYGRCYLRHFNELEHELQSRLNRGYKPASKYMNCFLSP). The helical transmembrane segment at 372–397 (LLTLLAKNCAFFAGSILAVLIALTIY) threads the bilayer. The Lumenal portion of the chain corresponds to 398 to 406 (DEDVLAVEH). Residues 407-424 (VLTTVTLLGVTVTVCRSF) traverse the membrane as a helical segment. Topologically, residues 425–470 (IPDQHMVFCPEQLLRVILAHIHYMPDHWQGNAHRSQTRDEFAQLFQ) are cytoplasmic. Residues 471–480 (YKAVFILEEL) lie within the membrane without spanning it. The Cytoplasmic segment spans residues 481–483 (LSP). The stretch at 484-492 (IVTPLILIF) is an intramembrane region. At 493 to 839 (CLRPRALEII…DELPPQVHKV (347 aa)) the chain is on the cytoplasmic side. Phosphoserine occurs at positions 656, 735, 738, 741, and 828. 2 disordered regions span residues 656 to 688 (SPLQ…GSSV) and 719 to 839 (QQAQ…VHKV). Residues 724-736 (EPERHVWHRRESD) show a composition bias toward basic and acidic residues. Composition is skewed to acidic residues over residues 737 to 747 (ESGESAPEEGG) and 823 to 832 (VPEEGSEDEL).

The protein belongs to the ATG9 family. Homotrimer; forms a homotrimer with a central pore that forms a path between the two membrane leaflets. Interacts (via cytoplasmic its C-terminus) with ATG2A. Interacts with SUPT20H. Interacts (via the tyrosine-based sorting signal motif) with AP4M1; promoting association with the AP-4 complex. Interacts with ARFIP1 and ARFIP2. Interacts with PI4K2A and PI4KB. Interacts with ATG4A; the interaction is direct and promotes ATG9A trafficking. Post-translationally, ufmylated in a DDRGK1 dependent manner.

It localises to the preautophagosomal structure membrane. It is found in the cytoplasmic vesicle. The protein resides in the autophagosome membrane. Its subcellular location is the golgi apparatus. The protein localises to the trans-Golgi network membrane. It localises to the late endosome membrane. It is found in the recycling endosome membrane. The protein resides in the endoplasmic reticulum membrane. Its subcellular location is the mitochondrion membrane. The enzyme catalyses a 1,2-diacyl-sn-glycero-3-phosphocholine(in) = a 1,2-diacyl-sn-glycero-3-phosphocholine(out). It carries out the reaction a 1,2-diacyl-sn-glycero-3-phospho-L-serine(in) = a 1,2-diacyl-sn-glycero-3-phospho-L-serine(out). The catalysed reaction is a 1,2-diacyl-sn-glycero-3-phosphoethanolamine(in) = a 1,2-diacyl-sn-glycero-3-phosphoethanolamine(out). Phospholipid scramblase involved in autophagy by mediating autophagosomal membrane expansion. Cycles between the preautophagosomal structure/phagophore assembly site (PAS) and the cytoplasmic vesicle pool and supplies membrane for the growing autophagosome. Lipid scramblase activity plays a key role in preautophagosomal structure/phagophore assembly by distributing the phospholipids that arrive through ATG2 (ATG2A or ATG2B) from the cytoplasmic to the luminal leaflet of the bilayer, thereby driving autophagosomal membrane expansion. Also required to supply phosphatidylinositol 4-phosphate to the autophagosome initiation site by recruiting the phosphatidylinositol 4-kinase beta (PI4KB) in a process dependent on ARFIP2, but not ARFIP1. In addition to autophagy, also plays a role in necrotic cell death. The protein is Autophagy-related protein 9A of Bos taurus (Bovine).